Reading from the N-terminus, the 102-residue chain is Large ribosomal subunit protein uL24 (102 aa).

This sequence belongs to the universal ribosomal protein uL24 family. As to quaternary structure, part of the 50S ribosomal subunit.

One of two assembly initiator proteins, it binds directly to the 5'-end of the 23S rRNA, where it nucleates assembly of the 50S subunit. Functionally, one of the proteins that surrounds the polypeptide exit tunnel on the outside of the subunit. This Limosilactobacillus fermentum (strain NBRC 3956 / LMG 18251) (Lactobacillus fermentum) protein is Large ribosomal subunit protein uL24.